A 226-amino-acid chain; its full sequence is Probable chemoreceptor glutamine deamidase CheD (226 aa).

Residues 207–226 form a disordered region; sequence PGGMRVERFDTPSRRDPVGA.

This sequence belongs to the CheD family.

The enzyme catalyses L-glutaminyl-[protein] + H2O = L-glutamyl-[protein] + NH4(+). Functionally, probably deamidates glutamine residues to glutamate on methyl-accepting chemotaxis receptors (MCPs), playing an important role in chemotaxis. This Bordetella bronchiseptica (strain ATCC BAA-588 / NCTC 13252 / RB50) (Alcaligenes bronchisepticus) protein is Probable chemoreceptor glutamine deamidase CheD.